The following is a 102-amino-acid chain: Iron-sulfur cluster assembly protein CyaY (102 aa).

Belongs to the frataxin family.

Its function is as follows. Involved in iron-sulfur (Fe-S) cluster assembly. May act as a regulator of Fe-S biogenesis. This Histophilus somni (strain 129Pt) (Haemophilus somnus) protein is Iron-sulfur cluster assembly protein CyaY.